A 277-amino-acid chain; its full sequence is MIIELAKNYGFCFGVKRAIKKAEQIKDAATIGPLIHNNEEISRLQKNFNVKTLENIQALSNEKKAIIRTHGITKQDLEELRKKDIEIFDATCPFVTKPQQICEQMSKEGYEVVIFGDENHPEVKGVKSYVSTKAYVVLDKKELQNIKLPNKIAVVSQTTKKPEHFMEIVNFLILKTKEVRVFNTICDATFKNQDAIKELSLKSDVMVVVGGKNSANTKQLFLIAKTNCEDSYLIETEEELKKEWFLDKKHCGISAGASTPDWIIQKVIAKIENFKIN.

Cys12 contacts [4Fe-4S] cluster. Positions 36 and 70 each coordinate (2E)-4-hydroxy-3-methylbut-2-enyl diphosphate. Dimethylallyl diphosphate contacts are provided by His36 and His70. The isopentenyl diphosphate site is built by His36 and His70. [4Fe-4S] cluster is bound at residue Cys92. His120 serves as a coordination point for (2E)-4-hydroxy-3-methylbut-2-enyl diphosphate. His120 serves as a coordination point for dimethylallyl diphosphate. His120 provides a ligand contact to isopentenyl diphosphate. The Proton donor role is filled by Glu122. Thr158 is a (2E)-4-hydroxy-3-methylbut-2-enyl diphosphate binding site. Cys186 serves as a coordination point for [4Fe-4S] cluster. Residues Ser214, Asn216, and Ser258 each contribute to the (2E)-4-hydroxy-3-methylbut-2-enyl diphosphate site. Positions 214, 216, and 258 each coordinate dimethylallyl diphosphate. Isopentenyl diphosphate-binding residues include Ser214, Asn216, and Ser258.

This sequence belongs to the IspH family. The cofactor is [4Fe-4S] cluster.

The enzyme catalyses isopentenyl diphosphate + 2 oxidized [2Fe-2S]-[ferredoxin] + H2O = (2E)-4-hydroxy-3-methylbut-2-enyl diphosphate + 2 reduced [2Fe-2S]-[ferredoxin] + 2 H(+). It carries out the reaction dimethylallyl diphosphate + 2 oxidized [2Fe-2S]-[ferredoxin] + H2O = (2E)-4-hydroxy-3-methylbut-2-enyl diphosphate + 2 reduced [2Fe-2S]-[ferredoxin] + 2 H(+). It functions in the pathway isoprenoid biosynthesis; dimethylallyl diphosphate biosynthesis; dimethylallyl diphosphate from (2E)-4-hydroxy-3-methylbutenyl diphosphate: step 1/1. The protein operates within isoprenoid biosynthesis; isopentenyl diphosphate biosynthesis via DXP pathway; isopentenyl diphosphate from 1-deoxy-D-xylulose 5-phosphate: step 6/6. In terms of biological role, catalyzes the conversion of 1-hydroxy-2-methyl-2-(E)-butenyl 4-diphosphate (HMBPP) into a mixture of isopentenyl diphosphate (IPP) and dimethylallyl diphosphate (DMAPP). Acts in the terminal step of the DOXP/MEP pathway for isoprenoid precursor biosynthesis. The sequence is that of 4-hydroxy-3-methylbut-2-enyl diphosphate reductase from Campylobacter jejuni subsp. jejuni serotype O:6 (strain 81116 / NCTC 11828).